A 348-amino-acid polypeptide reads, in one-letter code: Dihydroorotase (348 aa).

The Zn(2+) site is built by H17 and H19. Residues 19–21 and N45 contribute to the substrate site; that span reads HLR. Zn(2+) is bound by residues K103, H140, and H178. The residue at position 103 (K103) is an N6-carboxylysine. H140 lines the substrate pocket. Residue L223 participates in substrate binding. Residue D251 participates in Zn(2+) binding. Residue D251 is part of the active site. Residues H255 and A267 each coordinate substrate.

It belongs to the metallo-dependent hydrolases superfamily. DHOase family. Class II DHOase subfamily. In terms of assembly, homodimer. Requires Zn(2+) as cofactor.

It catalyses the reaction (S)-dihydroorotate + H2O = N-carbamoyl-L-aspartate + H(+). The protein operates within pyrimidine metabolism; UMP biosynthesis via de novo pathway; (S)-dihydroorotate from bicarbonate: step 3/3. Its function is as follows. Catalyzes the reversible cyclization of carbamoyl aspartate to dihydroorotate. This is Dihydroorotase from Salmonella newport (strain SL254).